Reading from the N-terminus, the 167-residue chain is Pathogenesis-related protein PRMS (167 aa).

The signal sequence occupies residues 1–27 (MEASNKLAVLLLWLVMAAATAVHPSYS). An SCP domain is found at 37–155 (PQNSARAAVG…NRGVFIICNY (119 aa)). Disulfide bonds link Cys71/Cys143, Cys116/Cys122, and Cys138/Cys153.

Belongs to the CRISP family.

Probably involved in the defense reaction of plants against pathogens. This Zea mays (Maize) protein is Pathogenesis-related protein PRMS (PRMS).